The primary structure comprises 344 residues: Dihydroorotase (344 aa).

Residues His13 and His15 each coordinate Zn(2+). Substrate-binding positions include 15–17 and Asn41; that span reads HLR. The Zn(2+) site is built by Lys98, His135, and His173. At Lys98 the chain carries N6-carboxylysine. A substrate-binding site is contributed by His135. Leu218 is a binding site for substrate. Zn(2+) is bound at residue Asp247. Residue Asp247 is part of the active site. Positions 251 and 263 each coordinate substrate.

It belongs to the metallo-dependent hydrolases superfamily. DHOase family. Class II DHOase subfamily. As to quaternary structure, homodimer. Zn(2+) is required as a cofactor.

The enzyme catalyses (S)-dihydroorotate + H2O = N-carbamoyl-L-aspartate + H(+). The protein operates within pyrimidine metabolism; UMP biosynthesis via de novo pathway; (S)-dihydroorotate from bicarbonate: step 3/3. In terms of biological role, catalyzes the reversible cyclization of carbamoyl aspartate to dihydroorotate. The polypeptide is Dihydroorotase (Neisseria meningitidis serogroup C / serotype 2a (strain ATCC 700532 / DSM 15464 / FAM18)).